Here is a 376-residue protein sequence, read N- to C-terminus: Succinyl-diaminopimelate desuccinylase (376 aa).

His-68 contacts Zn(2+). Asp-70 is an active-site residue. Residue Asp-101 coordinates Zn(2+). Glu-135 serves as the catalytic Proton acceptor. Residues Glu-136, Glu-164, and His-349 each contribute to the Zn(2+) site.

It belongs to the peptidase M20A family. DapE subfamily. In terms of assembly, homodimer. Requires Zn(2+) as cofactor. The cofactor is Co(2+).

It catalyses the reaction N-succinyl-(2S,6S)-2,6-diaminopimelate + H2O = (2S,6S)-2,6-diaminopimelate + succinate. Its pathway is amino-acid biosynthesis; L-lysine biosynthesis via DAP pathway; LL-2,6-diaminopimelate from (S)-tetrahydrodipicolinate (succinylase route): step 3/3. Its function is as follows. Catalyzes the hydrolysis of N-succinyl-L,L-diaminopimelic acid (SDAP), forming succinate and LL-2,6-diaminopimelate (DAP), an intermediate involved in the bacterial biosynthesis of lysine and meso-diaminopimelic acid, an essential component of bacterial cell walls. The sequence is that of Succinyl-diaminopimelate desuccinylase from Marinobacter nauticus (strain ATCC 700491 / DSM 11845 / VT8) (Marinobacter aquaeolei).